The chain runs to 585 residues: Pheromone-processing carboxypeptidase KEX1 (585 aa).

Positions 1–18 (MCLLARVRHIEITPDVNG) are cleaved as a signal peptide. Topologically, residues 19 to 469 (NMFFWHFQNK…DTARWEAYRK (451 aa)) are lumenal. Active-site residues include Ser-135 and Asp-335. Residues Asn-386 and Asn-394 are each glycosylated (N-linked (GlcNAc...) asparagine). Residue His-397 is part of the active site. An N-linked (GlcNAc...) asparagine glycan is attached at Asn-447. Residues 470 to 490 (SGEIVLVIVAFSAAGWGWWVW) form a helical membrane-spanning segment. The Cytoplasmic segment spans residues 491–585 (RERKKRRGYM…KGKGKEKMSG (95 aa)). Residues 526 to 585 (AADLEAGDFDENELDDLHMRTPTTVMGGEGNDPRYSVGAASEDSEDEEDVKGKGKEKMSG) are disordered. Positions 530 to 539 (EAGDFDENEL) are enriched in acidic residues. A compositionally biased stretch (basic and acidic residues) spans 575–585 (VKGKGKEKMSG).

It belongs to the peptidase S10 family.

Its subcellular location is the golgi apparatus. It localises to the trans-Golgi network membrane. The enzyme catalyses Preferential release of a C-terminal arginine or lysine residue.. Protease with a carboxypeptidase B-like function involved in the C-terminal processing of the lysine and arginine residues from protein precursors. Promotes cell fusion and is involved in the programmed cell death. In Podospora anserina (strain S / ATCC MYA-4624 / DSM 980 / FGSC 10383) (Pleurage anserina), this protein is Pheromone-processing carboxypeptidase KEX1 (KEX1).